Reading from the N-terminus, the 405-residue chain is Cysteine desulfurase IscS (405 aa).

Residues 75–76, asparagine 156, glutamine 184, and 204–206 contribute to the pyridoxal 5'-phosphate site; these read AT and SAH. Lysine 207 is modified (N6-(pyridoxal phosphate)lysine). Threonine 244 is a pyridoxal 5'-phosphate binding site. Residue cysteine 329 is the Cysteine persulfide intermediate of the active site. Residue cysteine 329 participates in [2Fe-2S] cluster binding.

Belongs to the class-V pyridoxal-phosphate-dependent aminotransferase family. NifS/IscS subfamily. In terms of assembly, homodimer. Forms a heterotetramer with IscU, interacts with other sulfur acceptors. Requires pyridoxal 5'-phosphate as cofactor.

The protein resides in the cytoplasm. It catalyses the reaction (sulfur carrier)-H + L-cysteine = (sulfur carrier)-SH + L-alanine. It functions in the pathway cofactor biosynthesis; iron-sulfur cluster biosynthesis. Its function is as follows. Master enzyme that delivers sulfur to a number of partners involved in Fe-S cluster assembly, tRNA modification or cofactor biosynthesis. Catalyzes the removal of elemental sulfur atoms from cysteine to produce alanine. Functions as a sulfur delivery protein for Fe-S cluster synthesis onto IscU, an Fe-S scaffold assembly protein, as well as other S acceptor proteins. The polypeptide is Cysteine desulfurase IscS (Methylobacillus flagellatus (strain ATCC 51484 / DSM 6875 / VKM B-1610 / KT)).